A 313-amino-acid chain; its full sequence is tRNA(Ile)-lysidine synthase (313 aa).

37 to 42 (SGGPDS) serves as a coordination point for ATP.

The protein belongs to the tRNA(Ile)-lysidine synthase family.

Its subcellular location is the cytoplasm. It carries out the reaction cytidine(34) in tRNA(Ile2) + L-lysine + ATP = lysidine(34) in tRNA(Ile2) + AMP + diphosphate + H(+). Functionally, ligates lysine onto the cytidine present at position 34 of the AUA codon-specific tRNA(Ile) that contains the anticodon CAU, in an ATP-dependent manner. Cytidine is converted to lysidine, thus changing the amino acid specificity of the tRNA from methionine to isoleucine. The protein is tRNA(Ile)-lysidine synthase of Corynebacterium efficiens (strain DSM 44549 / YS-314 / AJ 12310 / JCM 11189 / NBRC 100395).